We begin with the raw amino-acid sequence, 195 residues long: Nicotinamide riboside kinase 2 (195 aa).

Residue 9-17 participates in ATP binding; sequence GVTNGGKTT. Thr16 and Asp35 together coordinate Mg(2+). Asp35 (proton acceptor) is an active-site residue. Substrate contacts are provided by residues 35–38 and 54–55; these read DDFF and WD. Position 130 (Arg130) interacts with ATP. Residues Arg131 and 136 to 137 contribute to the substrate site; that span reads YM. ATP-binding positions include 134-136 and 174-176; these read RTY and KSP.

This sequence belongs to the uridine kinase family. NRK subfamily. Monomer. Interacts with ITGB1 alone or when associated with alpha-7, but not with alpha-5. In terms of tissue distribution, expressed in skeletal muscle (at protein level).

The enzyme catalyses beta-nicotinamide D-riboside + ATP = beta-nicotinamide D-ribonucleotide + ADP + H(+). It carries out the reaction beta-D-ribosylnicotinate + ATP = nicotinate beta-D-ribonucleotide + ADP + H(+). It participates in cofactor biosynthesis; NAD(+) biosynthesis. Functionally, catalyzes the phosphorylation of nicotinamide riboside (NR) and nicotinic acid riboside (NaR) to form nicotinamide mononucleotide (NMN) and nicotinic acid mononucleotide (NaMN). Reduces laminin matrix deposition and cell adhesion to laminin, but not to fibronectin. Involved in the regulation of PXN at the protein level and of PXN tyrosine phosphorylation. May play a role in the regulation of terminal myogenesis. The protein is Nicotinamide riboside kinase 2 (Nmrk2) of Mus musculus (Mouse).